The primary structure comprises 528 residues: Drimenol cyclase drtB (528 aa).

It belongs to the HAD-like hydrolase superfamily.

The catalysed reaction is (2E,6E)-farnesyl diphosphate + H2O = (5S,9S,10S)-drim-7-en-11-ol + diphosphate. Its pathway is secondary metabolite biosynthesis; terpenoid biosynthesis. In terms of biological role, drimenol cyclase; part of the gene cluster that mediates the biosynthesis of various drimane-type sesquiterpene esters, compounds that exhibit diverse biological activities and are widely present in eukaryotes. The pathway begins with the synthesis of the backbone drimenol by the terpene cyclase drtB using farnesyl pyrophosphate (FPP) as substrate. The cytochrome P450 monooxygenase drtD is then responsible for the hydroxylations at C-6, C-9 and C-12, as well as the oxidation of hydroxyl groups at C-6 and C-11 to a ketone and an aldehyde, respectively. Then, the biosynthesis can go in two directions, either the hydroxylated drimenol is further hydroxylated at C-2 and C-3 by an enzyme(s) not associated with the drt cluster, or the FAD-binding oxidoreductase drtC further oxidizes C-11 or C-12 to form the butyrolactone ring. DrtB, drtD and drtC are solely responsible for the formation of the different drimane structures observed during drimane sesquiterpenes biosynthesis. The polyketide synthase drtA synthesizes different lengths (C6 and C8) of PKS chains, which are then oxidized to varying degrees by the short-chain dehydrogenase drtF. Finally, these PKS chains are transferred onto drimane sesquiterpenes by the acyltransferase drtE, forming the sesquiterpene esters. In addition to the different fatty acyl-CoA chains produced by drtA, drtE is also able to use cinnamoyl-CoA as a substrate. The sequence is that of Drimenol cyclase drtB from Aspergillus calidoustus.